The chain runs to 185 residues: Elongation factor P (185 aa).

This sequence belongs to the elongation factor P family.

Its subcellular location is the cytoplasm. Its pathway is protein biosynthesis; polypeptide chain elongation. Functionally, involved in peptide bond synthesis. Stimulates efficient translation and peptide-bond synthesis on native or reconstituted 70S ribosomes in vitro. Probably functions indirectly by altering the affinity of the ribosome for aminoacyl-tRNA, thus increasing their reactivity as acceptors for peptidyl transferase. The chain is Elongation factor P from Geobacillus sp. (strain WCH70).